The chain runs to 359 residues: MGHAAGASAQIAPVVGIIANPISARDIRRVIANANSLQLADRVNIVLRLLAALASCGVERVLMMPDREGLRVMLARHLARRQGPDSGLPAVDYLDMPVTARVDDTLRAARCMADAGVAAIIVLGGDGTHRAVVRECGAVPIAGLSTGTNNAYPEMREPTIIGLATGLYATGRIPPAQALASNKRLDIVIRDGNGGFRRDIALVDAVISHEHFIGARALWKTDTLAAVYVSFADPEAIGLSSIAGLLEPVGRREEGGLAIELAAPGEGEFDLCAPIAPGLMCTVPVAGWQRLEHGRPHRVRQRSGIVALDGERELAFGPDDEVTVTLHDHAFRSIDVAACMRHAGRHHLMRSLPQPAAVG.

The protein localises to the cell membrane. Its pathway is ketone degradation; acetoin degradation. Functionally, essential for acetoin catabolism. In Cupriavidus necator (strain ATCC 17699 / DSM 428 / KCTC 22496 / NCIMB 10442 / H16 / Stanier 337) (Ralstonia eutropha), this protein is Acetoin catabolism protein X (acoX).